We begin with the raw amino-acid sequence, 360 residues long: Phospho-N-acetylmuramoyl-pentapeptide-transferase (360 aa).

A run of 10 helical transmembrane segments spans residues 26-46 (AILG…KLIE), 74-94 (MGGL…GDLG), 97-117 (YVWV…IDDY), 134-154 (YILQ…TAAN), 168-188 (VMPQ…VGAS), 199-219 (GLAI…AYLS), 236-256 (SGEL…FLWF), 263-283 (VFMG…IAVL), 288-308 (ILLV…ILQV), and 338-358 (VIVR…ATLK).

Belongs to the glycosyltransferase 4 family. MraY subfamily. Requires Mg(2+) as cofactor.

The protein resides in the cell inner membrane. The catalysed reaction is UDP-N-acetyl-alpha-D-muramoyl-L-alanyl-gamma-D-glutamyl-meso-2,6-diaminopimeloyl-D-alanyl-D-alanine + di-trans,octa-cis-undecaprenyl phosphate = di-trans,octa-cis-undecaprenyl diphospho-N-acetyl-alpha-D-muramoyl-L-alanyl-D-glutamyl-meso-2,6-diaminopimeloyl-D-alanyl-D-alanine + UMP. Its pathway is cell wall biogenesis; peptidoglycan biosynthesis. Catalyzes the initial step of the lipid cycle reactions in the biosynthesis of the cell wall peptidoglycan: transfers peptidoglycan precursor phospho-MurNAc-pentapeptide from UDP-MurNAc-pentapeptide onto the lipid carrier undecaprenyl phosphate, yielding undecaprenyl-pyrophosphoryl-MurNAc-pentapeptide, known as lipid I. The chain is Phospho-N-acetylmuramoyl-pentapeptide-transferase from Shewanella baltica (strain OS185).